Here is a 274-residue protein sequence, read N- to C-terminus: Acetylaranotin bis-thiomethyltransferase (274 aa).

The protein belongs to the class I-like SAM-binding methyltransferase superfamily.

It participates in mycotoxin biosynthesis. Its function is as follows. Acetylaranotin bis-thiomethyltransferase involved in the biosynthesis of acetylaranotin derivatives, members of the epipolythiodioxopiperazine (ETP) class of toxins characterized by a disulfide-bridged cyclic dipeptide. The first step of acetylaranotin biosynthesis is performed by the NRPS ataP which produces diketopiperazine cyclo-L-Phe-L-Phe via the condensation of 2 phenylalanines (L-Phe). The ataC domain of ataTC then catalyzes the formation of bishydroxylation of cyclo-L-Phe-L-Phe. The glutathione S-transferase domain ataG in ataIMG further catalyzes the conjugation of two glutathiones to the bishydroxylated intermediate. Next, the dipeptidase ataJ removes the Glu residues. The following step is performed by the carbon sulfur lyase domain ataI of ataIMG which may convert the bis-cysteinyl adduct to yield an epidithiol intermediate. The ataT domain from ataTC then catalyzes the oxidation of the free dithiols, followed by a cyclization step catalyzed by the cytochrome P450 ataF. AtaF probably acts as an epoxidase to promote a dual epoxidation formation at C8 and C9 along with C8' and C9', followed by the spontaneous nucleophilic attack of the amide nitrogens N10 and N10' to yield an intermediate with the pyrrolidine partial structure. The final steps of acetylaranotin biosynthesis involve the acetylation and ring rearrangement of an epitetrathiodiketopiperazine intermediate to produce acetylaranotin. AtaH probably catalyzes the acetylation of epitetrathiodiketopiperazine to produce a diacetate and ataY is responsible for the formation of the dihydrooxepin moiety that converts the diacetate intermediate to acetylaranotin via acetylapoaranotin. Both enzymes could function independently in the absence of the other. The acetylaranotin bis-thiomethyltransferase ataS located outside of acetylaranotin gene cluster is the main thiomethyltransferase responsible for converting acetylaranotin and its related intermediates to their methylated forms. This Aspergillus terreus (strain NIH 2624 / FGSC A1156) protein is Acetylaranotin bis-thiomethyltransferase.